The sequence spans 153 residues: Small ribosomal subunit protein uS5 (153 aa).

Residues phenylalanine 15 to valine 78 enclose the S5 DRBM domain.

It belongs to the universal ribosomal protein uS5 family. In terms of assembly, part of the 30S ribosomal subunit. Contacts proteins S4 and S8.

Functionally, with S4 and S12 plays an important role in translational accuracy. In terms of biological role, located at the back of the 30S subunit body where it stabilizes the conformation of the head with respect to the body. This Helicobacter acinonychis (strain Sheeba) protein is Small ribosomal subunit protein uS5.